Consider the following 129-residue polypeptide: Lysozyme C (129 aa).

Positions 1–129 (KVYGRCELAA…VSVWTRGCRL (129 aa)) constitute a C-type lysozyme domain. Cystine bridges form between C6–C127, C30–C115, C64–C80, and C76–C94. Residues E35 and D52 contribute to the active site.

Belongs to the glycosyl hydrolase 22 family. In terms of assembly, monomer.

Its subcellular location is the secreted. It carries out the reaction Hydrolysis of (1-&gt;4)-beta-linkages between N-acetylmuramic acid and N-acetyl-D-glucosamine residues in a peptidoglycan and between N-acetyl-D-glucosamine residues in chitodextrins.. Lysozymes have primarily a bacteriolytic function; those in tissues and body fluids are associated with the monocyte-macrophage system and enhance the activity of immunoagents. This chain is Lysozyme C (LYZ), found in Lophura leucomelanos (Kalij pheasant).